Reading from the N-terminus, the 274-residue chain is Eukaryotic translation initiation factor 3 subunit J (274 aa).

2 disordered regions span residues 1–120 and 227–246; these read MSGK…DLKH and EEKA…TKTS. Acidic residues predominate over residues 30–50; that stretch reads DEEGNESDVLDSWDAAEDSEV. Residues 46–112 adopt a coiled-coil conformation; the sequence is EDSEVEREKA…AERRERLRRE (67 aa). Basic and acidic residues-rich tracts occupy residues 51–67 and 79–92; these read EREK…KAEA and RIAE…RQLA. A compositionally biased stretch (acidic residues) spans 93–102; that stretch reads EDSDAEEETE. The segment covering 103–120 has biased composition (basic and acidic residues); it reads AERRERLRREQKESDLKH.

Belongs to the eIF-3 subunit J family. As to quaternary structure, component of the eukaryotic translation initiation factor 3 (eIF-3) complex.

It is found in the cytoplasm. Component of the eukaryotic translation initiation factor 3 (eIF-3) complex, which is involved in protein synthesis of a specialized repertoire of mRNAs and, together with other initiation factors, stimulates binding of mRNA and methionyl-tRNAi to the 40S ribosome. The eIF-3 complex specifically targets and initiates translation of a subset of mRNAs involved in cell proliferation. The chain is Eukaryotic translation initiation factor 3 subunit J (hcr-1) from Neurospora crassa (strain ATCC 24698 / 74-OR23-1A / CBS 708.71 / DSM 1257 / FGSC 987).